The chain runs to 420 residues: Tyrosine--tRNA ligase (420 aa).

Tyr-38 contacts L-tyrosine. A 'HIGH' region motif is present at residues 43–52 (PTGDSLHIGH). 2 residues coordinate L-tyrosine: Tyr-169 and Gln-173. Residues 231–235 (KFGKS) carry the 'KMSKS' region motif. Lys-234 serves as a coordination point for ATP. The 67-residue stretch at 353–419 (KNIVDFLVDT…GKRKYTLVTI (67 aa)) folds into the S4 RNA-binding domain.

It belongs to the class-I aminoacyl-tRNA synthetase family. TyrS type 1 subfamily. As to quaternary structure, homodimer.

The protein localises to the cytoplasm. The enzyme catalyses tRNA(Tyr) + L-tyrosine + ATP = L-tyrosyl-tRNA(Tyr) + AMP + diphosphate + H(+). Catalyzes the attachment of tyrosine to tRNA(Tyr) in a two-step reaction: tyrosine is first activated by ATP to form Tyr-AMP and then transferred to the acceptor end of tRNA(Tyr). The protein is Tyrosine--tRNA ligase of Lactobacillus acidophilus (strain ATCC 700396 / NCK56 / N2 / NCFM).